Reading from the N-terminus, the 610-residue chain is Transcription termination factor Rho (610 aa).

The tract at residues 117–227 (EVSRRERRGA…GDGAEAELRQ (111 aa)) is disordered. Basic and acidic residues predominate over residues 118 to 131 (VSRRERRGASREAD). The span at 178–187 (GVEQQSSSLQ) shows a compositional bias: polar residues. Residues 189-198 (RGDDDGEGRQ) are compositionally biased toward basic and acidic residues. Residues 199–214 (GRRGRRFRDRDRRRRG) are compositionally biased toward basic residues. Over residues 215–227 (ERSGDGAEAELRQ) the composition is skewed to basic and acidic residues. Positions 231–309 (VQPVAGILDV…VRLDSINGGS (79 aa)) constitute a Rho RNA-BD domain. ATP is bound by residues 352 to 357 (GKGQRA), 364 to 369 (KAGKTT), and R395.

The protein belongs to the Rho family. As to quaternary structure, homohexamer. The homohexamer assembles into an open ring structure.

Functionally, facilitates transcription termination by a mechanism that involves Rho binding to the nascent RNA, activation of Rho's RNA-dependent ATPase activity, and release of the mRNA from the DNA template. In Mycobacterium leprae (strain TN), this protein is Transcription termination factor Rho.